A 910-amino-acid polypeptide reads, in one-letter code: Harmonin (910 aa).

The segment at 1 to 86 (MDRKVAREFR…LTPRRSRKLK (86 aa)) is N-terminal domain. PDZ domains are found at residues 87–171 (EVRL…GLIP) and 211–295 (KVFI…AGRE). The mediates interaction with MYO7B stretch occupies residues 194-833 (GVRGGLGSPG…KAWNQGGDWI (640 aa)). Ser-219 carries the post-translational modification Phosphoserine. 2 coiled-coil regions span residues 299–377 (TDRE…WEED) and 417–482 (TIRK…DLEE). The tract at residues 563 to 688 (VMPHPPSVNS…PPRGPGVSTI (126 aa)) is disordered. Pro residues predominate over residues 564–582 (MPHPPSVNSPSKVPAPPVL). A compositionally biased stretch (low complexity) spans 583 to 596 (PSSGHVSSSSSPWV). Positions 599–611 (TPPPIPIPPPPSI) are enriched in pro residues. Positions 650–664 (NTHSGKPSSSPTTER) are enriched in polar residues. One can recognise a PDZ 3 domain in the interval 752 to 839 (DVRLLRIKKE…GDWIDLVVAV (88 aa)). The tract at residues 890-910 (KSRERNQTDPSWRPASSAPSP) is disordered. Residues 899–910 (PSWRPASSAPSP) show a composition bias toward low complexity.

In terms of assembly, part of the IMAC/intermicrovillar adhesion complex/intermicrovillar tip-link complex composed of ANKS4B, MYO7B, USH1C, CDHR2 and CDHR5. Part of a complex composed of USH1C, USH1G and MYO7A. Interacts with F-actin. Interacts with USH2A. Interacts with SLC4A7. Interacts (via PDZ1 domain) with the C-terminus of USHBP1. Interacts (via N-terminus and PDZ 2 domain) with CDH23. Interacts with USH1G. Interacts with MYO7B. Interacts with CDHR2 and CDHR5; may mediate their interaction with MYO7B at the microvilli tip. Interacts (via PDZ 1 domain) with ANKS4B. Interacts (via PDZ 1 domain) with DOCK4. Detected in stereocilia of cochlear hair cells (at protein level). Isoform 1 is expressed in the eye, cochlea, vestibule, heart, kidney, small intestine and testis; it is barely visible in skeletal muscle, liver, and lung and is absent from the brain. Isoforms 2 and 3 are expressed in the cochlea and vestibule.

The protein localises to the cytoplasm. It localises to the cytosol. Its subcellular location is the cytoskeleton. The protein resides in the cell projection. It is found in the microvillus. Functionally, anchoring/scaffolding protein that is a part of the functional network formed by USH1C, USH1G, CDH23 and MYO7A that mediates mechanotransduction in cochlear hair cells. Required for normal development and maintenance of cochlear hair cell bundles. As part of the intermicrovillar adhesion complex/IMAC plays a role in brush border differentiation, controlling microvilli organization and length. Probably plays a central regulatory role in the assembly of the complex, recruiting CDHR2, CDHR5 and MYO7B to the microvilli tips. This Mus musculus (Mouse) protein is Harmonin (Ush1c).